The sequence spans 315 residues: MRIAFAGTPEFARVALRQLLDAGFDVPLVLTQPDRPAGRGLKLQASAVKALAVERGLAVTQPRSLRLDGKYPDDASAAREALEAAQLDAMVVAAYGLILPAWVLKLPARGCLNIHASLLPRWRGAAPIHRAIEAGDTETGITIMQMDEGLDTGDMLLSERESIRSDDSTATLHDRLSALGGRLIVEALEAAACGGLVRRPQPAEGVTYAHKIDKAEAAIDWSRPAEEIERRVRAFDPFPGASFQQAGETVKLWRAAVAPQRGAPGTVLSAAEGVLRVACGDLSLDLLQLQRPGGRRVGARDFLAVRSTLQVGATL.

Serine 117–proline 120 is a (6S)-5,6,7,8-tetrahydrofolate binding site.

The protein belongs to the Fmt family.

The catalysed reaction is L-methionyl-tRNA(fMet) + (6R)-10-formyltetrahydrofolate = N-formyl-L-methionyl-tRNA(fMet) + (6S)-5,6,7,8-tetrahydrofolate + H(+). In terms of biological role, attaches a formyl group to the free amino group of methionyl-tRNA(fMet). The formyl group appears to play a dual role in the initiator identity of N-formylmethionyl-tRNA by promoting its recognition by IF2 and preventing the misappropriation of this tRNA by the elongation apparatus. This Methylibium petroleiphilum (strain ATCC BAA-1232 / LMG 22953 / PM1) protein is Methionyl-tRNA formyltransferase.